The primary structure comprises 530 residues: Chaperone Ric-8A (530 aa).

S435 is modified (phosphoserine). Residues T440 and T442 each carry the phosphothreonine modification. Phosphoserine occurs at positions 501, 522, 523, and 527.

It belongs to the synembryn family. Interacts with GDP-bound G alpha proteins GNAI1, GNAO1 and GNAQ, and with GNA13 with lower affinity. Does not interact with G-alpha proteins when they are in complex with subunits beta and gamma. Interacts (via C-terminus) with RGS14; the interaction stimulates the dissociation of the complex between RGS14 and the active GTP-bound form of GNAI1. Interacts with NCS1; interaction is favored in the absence of Ca(2+) and myristoylation of NCS1 is not required. In terms of processing, phosphorylated at Ser-435 and Thr-440 by CK2, stabilizing its interface with G alpha proteins.

It is found in the cytoplasm. The protein localises to the cell cortex. Functionally, chaperone that specifically binds and folds nascent G alpha proteins prior to G protein heterotrimer formation, promoting their stability and activity: folds GNAI1, GNAO1, GNA13 and GNAQ. Does not fold G(s) G-alpha proteins GNAS nor GNAL. Also acts as a guanine nucleotide exchange factor (GEF) for G alpha proteins by stimulating exchange of bound GDP for free GTP. Involved in regulation of microtubule pulling forces during mitotic movement of chromosomes by stimulating G(i)-alpha protein (GNAI1), possibly leading to release G(i)-alpha-GTP and NuMA proteins from the NuMA-GPSM2-G(i)-alpha-GDP complex. Also acts as an activator for G(q)-alpha (GNAQ) protein by enhancing the G(q)-coupled receptor-mediated ERK activation. This chain is Chaperone Ric-8A (RIC8A), found in Pongo abelii (Sumatran orangutan).